Reading from the N-terminus, the 67-residue chain is Alpha-conotoxin-like Pu1.1 (67 aa).

The N-terminal stretch at 1–21 (MGMRMMFTVFLLVVLATTVVS) is a signal peptide. The propeptide occupies 22–46 (FTSDRTSDGRNAAFNAFDLIALTAR). The residue at position 47 (Gln-47) is a Pyrrolidone carboxylic acid. 2 disulfide bridges follow: Cys-49–Cys-55 and Cys-50–Cys-63. The segment at 51-53 (NVP) is lacks the Ser-Xaa-Pro motif that is crucial for potent interaction with nAChR. Residue Cys-63 is modified to Cysteine amide.

It belongs to the conotoxin A superfamily. In terms of tissue distribution, expressed by the venom duct.

The protein localises to the secreted. Alpha-conotoxins act on postsynaptic membranes, they bind to the nicotinic acetylcholine receptors (nAChR) and thus inhibit them. Has possibly a distinct nAChR binding mode from other alpha-conotoxins, due to a different three residue motif (lacks the Ser-Xaa-Pro motif). This is Alpha-conotoxin-like Pu1.1 from Conus pulicarius (Flea-bitten cone).